Reading from the N-terminus, the 292-residue chain is Pyridoxal 5'-phosphate synthase subunit PdxS (292 aa).

Asp22 contributes to the D-ribose 5-phosphate binding site. Lys79 (schiff-base intermediate with D-ribose 5-phosphate) is an active-site residue. Residue Gly151 coordinates D-ribose 5-phosphate. D-glyceraldehyde 3-phosphate is bound at residue Arg163. D-ribose 5-phosphate is bound by residues Gly212 and 233–234 (GS).

Belongs to the PdxS/SNZ family. As to quaternary structure, in the presence of PdxT, forms a dodecamer of heterodimers.

It catalyses the reaction aldehydo-D-ribose 5-phosphate + D-glyceraldehyde 3-phosphate + L-glutamine = pyridoxal 5'-phosphate + L-glutamate + phosphate + 3 H2O + H(+). Its pathway is cofactor biosynthesis; pyridoxal 5'-phosphate biosynthesis. In terms of biological role, catalyzes the formation of pyridoxal 5'-phosphate from ribose 5-phosphate (RBP), glyceraldehyde 3-phosphate (G3P) and ammonia. The ammonia is provided by the PdxT subunit. Can also use ribulose 5-phosphate and dihydroxyacetone phosphate as substrates, resulting from enzyme-catalyzed isomerization of RBP and G3P, respectively. The sequence is that of Pyridoxal 5'-phosphate synthase subunit PdxS from Thermoanaerobacter pseudethanolicus (strain ATCC 33223 / 39E) (Clostridium thermohydrosulfuricum).